A 704-amino-acid chain; its full sequence is Preterpestacin I synthase tpcA (704 aa).

The segment at 1–329 (MEQLSYQSKL…CSACPRQNAW (329 aa)) is terpene cyclase. D96 serves as a coordination point for Mg(2+). Residues D96, N231, 235 to 239 (SWERE), and 325 to 326 (RQ) each bind substrate. Positions 96-100 (DDGGE) match the DDXXD 1 motif. An NSE/DTE motif is present at residues 231-239 (NDYFSWERE). The prenyltransferase stretch occupies residues 330–688 (KDMSSQSLNG…MLRLCLAKLS (359 aa)). The tract at residues 361-380 (KDSSFFGSQPSDDEPSLSEV) is disordered. Residues K406, R409, and H438 each coordinate isopentenyl diphosphate. The Mg(2+) site is built by D445 and D449. Residues 445–449 (DDLED) carry the DDXXD 2 motif. R454 provides a ligand contact to dimethylallyl diphosphate. R455 lines the isopentenyl diphosphate pocket. Positions 532, 533, 568, 575, 583, and 593 each coordinate dimethylallyl diphosphate.

In the N-terminal section; belongs to the terpene synthase family. It in the C-terminal section; belongs to the FPP/GGPP synthase family. As to quaternary structure, hexamer. Mg(2+) serves as cofactor.

It carries out the reaction isopentenyl diphosphate + (2E,6E)-farnesyl diphosphate = (2E,6E,10E)-geranylgeranyl diphosphate + diphosphate. The enzyme catalyses isopentenyl diphosphate + (2E,6E,10E)-geranylgeranyl diphosphate = (2E,6E,10E,14E)-geranylfarnesyl diphosphate + diphosphate. It functions in the pathway secondary metabolite biosynthesis; terpenoid biosynthesis. Functionally, bifunctional terpene synthase; part of the gene cluster that mediates the biosynthesis of terpestacin. The bifunctional terpene synthase tpcA converts isopentenyl diphosphate (IPP) and dimethylallyl diphosphate (DMAPP) into the sesterterpene preterpestacin I. The C-terminal prenyltransferase (PT) domain of tpcA catalyzes formation of GFPP, whereas the N-terminal terpene cyclase (TC) domain catalyzes the cyclization of GFPP into preterpestacin I. The cytochrome P450 monooxygenase tpcB then hydroxylates preterpestacin I to yield 24-hydroxypreterpstacin I (renamed as preterpestacin II) whereas the cytochrome P450 monooxygenase tpcC further hydroxylates preterpestacin II to yield 16,17-dihydroxypreterpestacin II (renamed as preterpestacin III). Finally, the FAD-dependent monooxygenase tpcD converts preterpestacin III into terpestacin. The polypeptide is Preterpestacin I synthase tpcA (Cochliobolus heterostrophus (strain C5 / ATCC 48332 / race O) (Southern corn leaf blight fungus)).